The primary structure comprises 534 residues: UDP-glucuronosyltransferase 1A5 (534 aa).

An N-terminal signal peptide occupies residues 1 to 28 (MATGLQVPLPQLATGLLLLLSVQPWAES). N-linked (GlcNAc...) asparagine glycosylation is found at Asn119, Asn296, and Asn348. Residues 492–508 (VIGFLLAVVLTVAFITF) form a helical membrane-spanning segment.

It belongs to the UDP-glycosyltransferase family. Homodimer. Homooligomer. Interacts with UGT1A1, UGT1A3, UGT1A4, UGT1A6, UGT1A7, UGT1A8, UGT1A9 and UGT1A10 to form heterodimers. Isoform 1 interacts with isoform 2/i2 suggesting that oligomerization is involved in negative regulation of transferase activity by isoform 2. Isoform 1 also interacts with respective i2 isoforms of UGT1A1, UGT1A3, UGT1A4, UGT1A6, UGT1A7, UGT1A8, UGT1A9 and UGT1A10. As to expression, isoform 1 and isoform 2 are expressed in colon and small intestine. Neither isoform is expressed in liver, kidney or esophagus.

The protein resides in the endoplasmic reticulum membrane. It carries out the reaction glucuronate acceptor + UDP-alpha-D-glucuronate = acceptor beta-D-glucuronoside + UDP + H(+). The enzyme catalyses zolasartan + UDP-alpha-D-glucuronate = zolarsartan-1-N-beta-D-glucuronide + UDP. In terms of biological role, UDP-glucuronosyltransferase (UGT) that catalyzes phase II biotransformation reactions in which lipophilic substrates are conjugated with glucuronic acid to increase the metabolite's water solubility, thereby facilitating excretion into either the urine or bile. Essential for the elimination and detoxification of drugs, xenobiotics and endogenous compounds. Involved in the glucuronidation of the AGTR1 angiotensin receptor antagonist zolarsatan, a drug which can inhibit the effect of angiotensin II. Functionally, lacks UGT glucuronidation activity but acts as a negative regulator of isoform 1. This is UDP-glucuronosyltransferase 1A5 from Homo sapiens (Human).